A 241-amino-acid chain; its full sequence is Diacetyl reductase [(S)-acetoin forming] (241 aa).

An NAD(+)-binding site is contributed by 6 to 30 (LVTGAGQGIGKAIALRLVKDGFAVA). Serine 139 is a substrate binding site. Tyrosine 152 serves as the catalytic Proton acceptor. Lysine 156 is an active-site residue.

The protein belongs to the short-chain dehydrogenases/reductases (SDR) family. In terms of assembly, homotetramer.

It carries out the reaction (S)-acetoin + NAD(+) = diacetyl + NADH + H(+). Its function is as follows. Catalyzes the irreversible reduction of 2,3-butanediol to (S)-acetoin in the presence of NADH. The chain is Diacetyl reductase [(S)-acetoin forming] (budC) from Raoultella terrigena (Klebsiella terrigena).